Here is a 130-residue protein sequence, read N- to C-terminus: 3-aminoacrylate deaminase RutC (130 aa).

Belongs to the RutC family.

The catalysed reaction is (Z)-3-aminoacrylate + H2O + H(+) = 3-oxopropanoate + NH4(+). Functionally, involved in pyrimidine catabolism. Catalyzes the deamination of 3-aminoacrylate to malonic semialdehyde, a reaction that can also occur spontaneously. RutC may facilitate the reaction and modulate the metabolic fitness, rather than catalyzing essential functions. The sequence is that of 3-aminoacrylate deaminase RutC from Methylorubrum extorquens (strain CM4 / NCIMB 13688) (Methylobacterium extorquens).